Reading from the N-terminus, the 293-residue chain is Elongation factor Ts (293 aa).

Residues 79–82 are involved in Mg(2+) ion dislocation from EF-Tu; sequence TDFV.

The protein belongs to the EF-Ts family.

It is found in the cytoplasm. In terms of biological role, associates with the EF-Tu.GDP complex and induces the exchange of GDP to GTP. It remains bound to the aminoacyl-tRNA.EF-Tu.GTP complex up to the GTP hydrolysis stage on the ribosome. The protein is Elongation factor Ts (tsf) of Halalkalibacterium halodurans (strain ATCC BAA-125 / DSM 18197 / FERM 7344 / JCM 9153 / C-125) (Bacillus halodurans).